We begin with the raw amino-acid sequence, 426 residues long: ATP-dependent Clp protease ATP-binding subunit ClpX (426 aa).

Residues 1–52 enclose the ClpX-type ZB domain; that stretch reads MNEIKKRCSFCNKEESLDNPIINSGITPDVYICNYCLIVGSEILTGYLNKNP. Cysteine 8, cysteine 11, cysteine 33, and cysteine 36 together coordinate Zn(2+). 129–136 provides a ligand contact to ATP; that stretch reads PTGSGKTL.

Belongs to the ClpX chaperone family. As to quaternary structure, component of the ClpX-ClpP complex. Forms a hexameric ring that, in the presence of ATP, binds to fourteen ClpP subunits assembled into a disk-like structure with a central cavity, resembling the structure of eukaryotic proteasomes.

ATP-dependent specificity component of the Clp protease. It directs the protease to specific substrates. Can perform chaperone functions in the absence of ClpP. This chain is ATP-dependent Clp protease ATP-binding subunit ClpX, found in Helicobacter hepaticus (strain ATCC 51449 / 3B1).